Reading from the N-terminus, the 496-residue chain is UDP-glycosyltransferase 73C4 (496 aa).

UDP-alpha-D-glucose-binding positions include Ser297, 357-359, 374-382, and 396-399; these read SPQ, HCGWNSTLE, and FGDQ. The segment at 450–475 is disordered; it reads SDDAKERRRRVKELGESAHKAVEEGG. A compositionally biased stretch (basic and acidic residues) spans 451-472; sequence DDAKERRRRVKELGESAHKAVE.

Belongs to the UDP-glycosyltransferase family.

This is UDP-glycosyltransferase 73C4 (UGT73C4) from Arabidopsis thaliana (Mouse-ear cress).